A 1455-amino-acid chain; its full sequence is Membrane-associated guanylate kinase, WW and PDZ domain-containing protein 2 (1455 aa).

One can recognise a PDZ 1 domain in the interval 17 to 101 (ESVIGRNPEG…PLRLKCVKQG (85 aa)). In terms of domain architecture, Guanylate kinase-like spans 109-283 (RHYLNLRFQK…APVYSQPEEL (175 aa)). Residues 205-306 (PGATPSAEGK…DNEEPDPLPD (102 aa)) form a disordered region. Positions 241 to 252 (VVNGNGVVVTPE) are enriched in low complexity. The span at 281–296 (EELKEQMDDTKPTKPE) shows a compositional bias: basic and acidic residues. 2 consecutive WW domains span residues 302–335 (DPLP…DPRL) and 348–381 (NELP…NPVL). An interaction with DDN region spans residues 302–381 (DPLPDNWEMA…RRTQFENPVL (80 aa)). Tyr362 is subject to Phosphotyrosine. PDZ domains are found at residues 426 to 510 (STTL…CRGY) and 605 to 683 (TLTI…HRGG). Ser686 carries the phosphoserine modification. In terms of domain architecture, PDZ 4 spans 778 to 860 (DVHLRRMESG…NGQVNLTVRR (83 aa)). Residue Tyr827 is modified to Phosphotyrosine. The segment at 869–913 (CPENGRSPGSVSTHHSSPRSDYATYTNSNHAAPSSNASPPEGFAS) is disordered. Phosphoserine is present on residues Ser884 and Ser885. Low complexity predominate over residues 895–908 (NSNHAAPSSNASPP). Positions 920-1010 (DVVIHRKENE…SVTLRIIPQE (91 aa)) constitute a PDZ 5 domain. A compositionally biased stretch (polar residues) spans 1011-1040 (ELNSPTSAPSSEKQSPMAQQSPLAQQSPLA). The interval 1011 to 1136 (ELNSPTSAPS…PDTRQYPLSD (126 aa)) is disordered. Ser1014 carries the post-translational modification Phosphoserine. Residues 1067–1083 (NSYRSEVKARQDVKPDI) show a composition bias toward basic and acidic residues. Positions 1147–1229 (TVDMEKGAKG…RVRLLLKRGT (83 aa)) constitute a PDZ 6 domain. Positions 1231–1455 (QVPEYDEPAP…LKPGASAASR (225 aa)) are disordered. Residues 1238-1249 (PAPWSSPAAAAP) show a composition bias toward low complexity. Over residues 1287–1299 (DIKREHDVRKPKE) the composition is skewed to basic and acidic residues. 3 stretches are compositionally biased toward low complexity: residues 1346-1363 (EARA…AARA), 1399-1412 (ALEA…RAGP), and 1422-1433 (APARKAAVAPGP).

The protein belongs to the MAGUK family. Interacts (via its WW domains) with DRPLA. Interacts (via its second PDZ domain) with PTEN (via unphosphorylated C-terminus); this interaction diminishes the degradation rate of PTEN. Interacts (via guanylate kinase domain) with DLGAP1. Interacts (via the PDZ domains) with GRIN2A, GRID2 and NLGN1. Interacts with CTNND2, CTNNB1, MAGUIN-1, ACVR2A, SMAD2 and SMAD3. Part of a complex consisting of MAGI2/ARIP1, ACVR2A, ACVR1B and SMAD3. May interact with HTR2A. Interacts with IGSF9, RAPGEF2 and HTR4. Identified in a complex with ACTN4, CASK, IQGAP1, NPHS1, SPTAN1 and SPTBN1. Found in a complex, at least composed of KIDINS220, MAGI2, NTRK1 and RAPGEF2; the complex is mainly formed at late endosomes in a NGF-dependent manner. Interacts with RAPGEF2; the interaction occurs before or after nerve growth factor (NGF) stimulation. Interacts (via PDZ domain) with KIDINS220 (via C-terminal domain). Interacts with DDN. Interacts with DLL1. Found in a complex with IGSF9B and NLGN2; the interaction with IGSF9B is mediated via the PDZ 5 and PDZ 6 domains, while the interaction with NLGN2 is mediated via the WW1, WW2 and PDZ2 domains. Interacts (via PDZ 6 domain) with USH1G (via SAM domain); the interaction is triggered by phosphorylation of USH1G by CK2 and negatively regulates MAGI2-mediated endocytosis. Specifically expressed in brain.

The protein localises to the cytoplasm. It is found in the late endosome. The protein resides in the synapse. It localises to the synaptosome. Its subcellular location is the cell membrane. The protein localises to the cytoskeleton. It is found in the microtubule organizing center. The protein resides in the centrosome. It localises to the cell projection. Its subcellular location is the cilium. The protein localises to the centriole. It is found in the photoreceptor inner segment. The protein resides in the photoreceptor outer segment. In terms of biological role, seems to act as a scaffold molecule at synaptic junctions by assembling neurotransmitter receptors and cell adhesion proteins. Plays a role in nerve growth factor (NGF)-induced recruitment of RAPGEF2 to late endosomes and neurite outgrowth. May play a role in regulating activin-mediated signaling in neuronal cells. Enhances the ability of PTEN to suppress AKT1 activation. Plays a role in receptor-mediated clathrin-dependent endocytosis which is required for ciliogenesis. The protein is Membrane-associated guanylate kinase, WW and PDZ domain-containing protein 2 (MAGI2) of Homo sapiens (Human).